A 497-amino-acid chain; its full sequence is Cytochrome P450 26A1 (497 aa).

Cys442 provides a ligand contact to heme.

Belongs to the cytochrome P450 family. The cofactor is heme. In terms of tissue distribution, expressed in most fetal and adult tissues with highest levels in adult liver, heart, pituitary gland, adrenal gland, placenta and regions of the brain. Expressed at high levels in lung, pancreas, skin and uterus (at protein level). Lower expression level is detected in spleen, kidney, intestine and adipose tissue (at protein level).

It localises to the endoplasmic reticulum membrane. Its subcellular location is the microsome membrane. It catalyses the reaction all-trans-retinoate + reduced [NADPH--hemoprotein reductase] + O2 = all-trans-(4S)-hydroxyretinoate + oxidized [NADPH--hemoprotein reductase] + H2O + H(+). It carries out the reaction all-trans-(4S)-hydroxyretinoate + reduced [NADPH--hemoprotein reductase] + O2 = all-trans-(4S,16)-dihydroxyretinoate + oxidized [NADPH--hemoprotein reductase] + H2O + H(+). The enzyme catalyses all-trans-retinoate + reduced [NADPH--hemoprotein reductase] + O2 = all-trans-18-hydroxyretinoate + oxidized [NADPH--hemoprotein reductase] + H2O + H(+). In terms of biological role, a cytochrome P450 monooxygenase involved in the metabolism of retinoates (RAs), the active metabolites of vitamin A, and critical signaling molecules in animals. RAs exist as at least four different isomers: all-trans-RA (atRA), 9-cis-RA, 13-cis-RA, and 9,13-dicis-RA, where atRA is considered to be the biologically active isomer, although 9-cis-RA and 13-cis-RA also have activity. Catalyzes the hydroxylation of atRA primarily at C-4 and C-18, thereby contributing to the regulation of atRA homeostasis and signaling. Hydroxylation of atRA limits its biological activity and initiates a degradative process leading to its eventual elimination. Involved in the convertion of atRA to all-trans-4-oxo-RA. Able to metabolize other RAs such as 9-cis, 13-cis and 9,13-di-cis RA. Can oxidize all-trans-13,14-dihydroretinoate (DRA) to metabolites which could include all-trans-4-oxo-DRA, all-trans-4-hydroxy-DRA, all-trans-5,8-epoxy-DRA, and all-trans-18-hydroxy-DRA. May play a role in the oxidative metabolism of xenobiotics such as tazarotenic acid. The sequence is that of Cytochrome P450 26A1 from Homo sapiens (Human).